A 260-amino-acid chain; its full sequence is MMRLSGADKMSPSERVQLLESRLGLSFSRMETALEALTHKTYVNETRDKELKDNQRLEFLGDSVVNLAVSHRLMARCPGLPEGDLTKMRARVVNEDGLARVARTIPLGDLLLLGRGELMSGGREKNSVLADALEAVFGAVFLTSGLDAAVTLVDRYFADLLDEVSSGQGRLDYKTLLQEMAHERLKLQPRYRVVSESGPEHSKVFEVELMLGETAFARATGRSKKEAEQSAAQATLEKLREDAACPTSPPPGTPRHDTPA.

Residues 16 to 145 (VQLLESRLGL…VFGAVFLTSG (130 aa)) form the RNase III domain. Residue glutamate 58 participates in Mg(2+) binding. Residue aspartate 62 is part of the active site. Positions 131 and 134 each coordinate Mg(2+). Glutamate 134 is an active-site residue. The DRBM domain maps to 172–241 (DYKTLLQEMA…AQATLEKLRE (70 aa)). Positions 219–260 (ATGRSKKEAEQSAAQATLEKLREDAACPTSPPPGTPRHDTPA) are disordered.

It belongs to the ribonuclease III family. Homodimer. Mg(2+) is required as a cofactor.

Its subcellular location is the cytoplasm. It catalyses the reaction Endonucleolytic cleavage to 5'-phosphomonoester.. Its function is as follows. Digests double-stranded RNA. Involved in the processing of primary rRNA transcript to yield the immediate precursors to the large and small rRNAs (23S and 16S). Processes some mRNAs, and tRNAs when they are encoded in the rRNA operon. Processes pre-crRNA and tracrRNA of type II CRISPR loci if present in the organism. This is Ribonuclease 3 from Myxococcus xanthus (strain DK1622).